Consider the following 1008-residue polypeptide: MNSQQFPRQAASMPSPQVSNSGASVGQNVQGQGDEVARDMDVQSRDLLGAGTVLPSRDDKQEPVVVRPYPQVQMFTSHHPLQPAPSLTMTAQPAHLTSAVPLSFSENILKQTSKSTMPSRPIAPAPPSAMSAVPKVSGQGTVTMESGLPQTSAIPVATISGQQGHPNSLHHIMAATNVHMSIIRSSAPGPPLHIGASHLPRGAAAAAVMSSSKVTTMLRPASAQIPSAAAAQSATQHIIHPPIQSRPPVTTTSLTPAVVATVSATRAQSPVITTTPAHAAEPVLRPTLSIQQHPPPSAISIQRSAQARDAATTRITLPTHPALGVQKPQLHAMTQKTLFGTGNPVAAATVAPILATNTLPSVTTSGSAPHTQVPTSTIVSMTMPTHSSHATAVTASNIPVAKVVPQQITHTSPRIQSDYGTERGNLIPIPGHRASPNPMTMEARSENRQPVPVQLQYFLPTYPPSAYPLAAHTYTPITSSVSTIRQYPVSAQAPNSAITAQSVASTVHLNQMQLINMDTSHARHIQGIQPAPVSAQGIQQSPFSAQGIQATPISTQGIQPTQMNTQAIHPATSITNQGVQTSSVSSQQASSEPKASVVLAEGATIVANPINGAFNATPGGTTVMQSHSQSPGIGSSPAQGSSPRPSILRKKPATDGTKPKADLHAAVAPGVTGDPGIADQPSAAASLPSSHHPAAAVPSPPSQPASGSMPSSIHITPATIPALSAPPPLLSNAPSGAVMPEAKVKEEAEPMDISRPVSVPLLPPNSISSPLTVLANNISIPVGELLPGASPRKKPRKQQHVISTEEGDMMETNSTDEERCHAVKPLTSRPEKRKSPPKEYIDEEGVRYVPVRPRPPITLLRHYRNPWKAAYHHFQRYSDVRVKEEKKLTLQEVANQKGITCRVQGWKTHLCAAQLLQLIKLEQDVFERLTVLQEGLVPKKKTATDDDLHRINELIQGNMQRCKLVMDQITESRDCMLKVLDHKDRVLKLLNKSGASRRLSKVKQKDKM.

The segment covering 1–31 has biased composition (polar residues); the sequence is MNSQQFPRQAASMPSPQVSNSGASVGQNVQG. 4 disordered regions span residues 1 to 44, 113 to 134, 415 to 435, and 617 to 720; these read MNSQ…DVQS, SKST…SAVP, IQSD…HRAS, and TPGG…PATI. Residues 35–44 are compositionally biased toward basic and acidic residues; it reads EVARDMDVQS. Polar residues predominate over residues 618–644; the sequence is PGGTTVMQSHSQSPGIGSSPAQGSSPR. Low complexity predominate over residues 678–697; the sequence is ADQPSAAASLPSSHHPAAAV.

Belongs to the SAP130 family.

Its subcellular location is the nucleus. In terms of biological role, acts as a transcriptional repressor. The chain is Histone deacetylase complex subunit SAP130-A (sap130-a) from Xenopus laevis (African clawed frog).